The following is a 359-amino-acid chain: Type II restriction enzyme HgiDI (359 aa).

It catalyses the reaction Endonucleolytic cleavage of DNA to give specific double-stranded fragments with terminal 5'-phosphates.. In terms of biological role, a P subtype restriction enzyme that recognizes the double-stranded sequence 5'-GRCGYC-3' and cleaves after R-2. This Herpetosiphon aurantiacus (Herpetosiphon giganteus) protein is Type II restriction enzyme HgiDI.